Consider the following 479-residue polypeptide: Adenosylhomocysteinase (479 aa).

The substrate site is built by T56, D133, and E199. 200–202 is an NAD(+) binding site; sequence TTT. Residues K229 and D233 each contribute to the substrate site. NAD(+)-binding positions include N234, 263-268, E286, N321, 342-344, and N390; these read GYGDVG and IGH.

Belongs to the adenosylhomocysteinase family. In terms of assembly, homotetramer. NAD(+) is required as a cofactor.

The enzyme catalyses S-adenosyl-L-homocysteine + H2O = L-homocysteine + adenosine. It participates in amino-acid biosynthesis; L-homocysteine biosynthesis; L-homocysteine from S-adenosyl-L-homocysteine: step 1/1. Its function is as follows. Adenosylhomocysteine is a competitive inhibitor of S-adenosyl-L-methionine-dependent methyl transferase reactions; therefore adenosylhomocysteinase may play a key role in the control of methylations via regulation of the intracellular concentration of adenosylhomocysteine. This chain is Adenosylhomocysteinase, found in Plasmodium yoelii yoelii.